Here is a 106-residue protein sequence, read N- to C-terminus: ATP-dependent Clp protease adapter protein ClpS (106 aa).

Belongs to the ClpS family. As to quaternary structure, binds to the N-terminal domain of the chaperone ClpA.

Functionally, involved in the modulation of the specificity of the ClpAP-mediated ATP-dependent protein degradation. The polypeptide is ATP-dependent Clp protease adapter protein ClpS (Yersinia enterocolitica serotype O:8 / biotype 1B (strain NCTC 13174 / 8081)).